Reading from the N-terminus, the 500-residue chain is MPSPTKAAEAATKATATSDCSCSAASVEQRAPSNAANPSSSLATSGKIGGKTQDQTAAINKQKEFAVPNETSDSGFISGPQSSQIFSEEIVPDSEEQDKDQQESAPQKEQPVVLDSGIIDEEEDQEEQEKEEEHQDTTTATADSMRLKHSADTGIPQWTVESHLVSRGEQLNNLGQSSSTQITGRSKVQSSTASTANANPSGSGATSSAPPSSINIMNAWEQFYQQNDDGDTPLHLACISGSVDVVAALIRMAPHPCLLNIQNDVAQTPLHLAALTAQPNIMRILLLAGAEPTVRDRHGNTALHLSCIAGEKQCVRALTEKFGATEIHEAHRQYGHRSNDKAVSSLSYACLPADLEIRNYDGERCVHLAAEAGHIDILRILVSHGADINAREGKSGRTPLHIAIEGCNEDLANFLLDECEKLNLETATYAGLTAYQFACIMNKSRMQNILEKRGAETVTPPDSDYDSSDIEDLDDTKMYDRFGDPRYFVSYNGGNPMTVA.

Residues 1–43 (MPSPTKAAEAATKATATSDCSCSAASVEQRAPSNAANPSSSLA) are compositionally biased toward low complexity. 2 disordered regions span residues 1–148 (MPSP…MRLK) and 171–212 (LNNL…APPS). Position 45 is a phosphoserine; by PKC (serine 45). Polar residues predominate over residues 69-86 (NETSDSGFISGPQSSQIF). Residues 118 to 130 (IIDEEEDQEEQEK) are compositionally biased toward acidic residues. Residue serine 144 is modified to Phosphoserine; by PKC. Positions 171–189 (LNNLGQSSSTQITGRSKVQ) are enriched in polar residues. Position 183 is a phosphothreonine; by PKC (threonine 183). Over residues 190-212 (SSTASTANANPSGSGATSSAPPS) the composition is skewed to low complexity. 5 ANK repeats span residues 229–261 (DGDT…LLNI), 265–294 (VAQT…EPTV), 298–327 (HGNT…ATEI), 361–390 (DGER…DINA), and 395–424 (SGRT…KLNL). A phosphothreonine; by PKC mark is found at threonine 293 and threonine 319. At serine 395 the chain carries Phosphoserine; by PKC.

This sequence belongs to the NF-kappa-B inhibitor family. As to quaternary structure, phosphorylated isoform A binds to dorsal (dl); inhibits dl translocation to the nucleus and therefore from binding to DNA. In vitro, interacts with IKKbeta. Interacts with cactin and kappa-B-Ras. Post-translationally, activated IKKbeta phosphorylates cact. As to expression, expressed in ovary (at protein level).

The protein resides in the cytoplasm. Involved in the formation of the dorsoventral pattern. It inhibits nuclear translocation of the dorsal morphogen in the dorsal region of the embryo. Acts as a negative regulator of the NF-kappa-B (rel) signaling pathway. Cact is degraded by IKKbeta, this is essential for NF-kappa-B (rel) activation. The sequence is that of NF-kappa-B inhibitor cactus (cact) from Drosophila melanogaster (Fruit fly).